Consider the following 400-residue polypeptide: Flavo-diiron protein FprA2 (400 aa).

A zinc metallo-hydrolase region spans residues 32-216 (GTSYNAYLIK…VVKGLDILDA (185 aa)). Fe cation is bound by residues His79, Glu81, Asp83, His147, Asp166, and His226. A Flavodoxin-like domain is found at 257-397 (IPIFYCSAYG…KAFKFGEDFA (141 aa)). FMN contacts are provided by residues 263 to 267 (SAYGN) and 345 to 372 (AFGS…KVFQ).

This sequence in the N-terminal section; belongs to the zinc metallo-hydrolase group 3 family. In terms of assembly, homotetramer. FMN serves as cofactor. Requires Fe cation as cofactor.

It catalyses the reaction 2 NADH + O2 + 2 H(+) = 2 NAD(+) + 2 H2O. In terms of biological role, catalyzes the four-electron reduction of molecular oxygen to water. In fact, functions as the terminal component of an NADH oxidase (NADH:O(2) oxidoreductase) when using NADH:rubredoxin oxidoreductase (NROR) and rubredoxin (Rd) as electron transport intermediaries between NADH and FDP. Is thus able to reductively scavenge intracellular dioxygen and is part of an oxidative stress defense system in C.acetobutylicum, an obligate anaerobic bacterium. Can also serve as the terminal component of an NADH:nitric oxide oxidoreductase (NOR) with a catalytic efficiency comparable to that of its NADH oxidase activity, and therefore might have an in vivo role in scavenging nitric oxide. This chain is Flavo-diiron protein FprA2 (fprA2), found in Clostridium acetobutylicum (strain ATCC 824 / DSM 792 / JCM 1419 / IAM 19013 / LMG 5710 / NBRC 13948 / NRRL B-527 / VKM B-1787 / 2291 / W).